Here is a 237-residue protein sequence, read N- to C-terminus: Uridylate kinase (237 aa).

9–12 is an ATP binding site; sequence KLSG. Positions 17–22 are involved in allosteric activation by GTP; that stretch reads GTQGYG. Gly51 provides a ligand contact to UMP. Positions 52 and 56 each coordinate ATP. Residues Asp71 and 132–139 contribute to the UMP site; that span reads CGNPFFTT. Positions 159, 165, and 168 each coordinate ATP.

Belongs to the UMP kinase family. As to quaternary structure, homohexamer.

It localises to the cytoplasm. The catalysed reaction is UMP + ATP = UDP + ADP. It participates in pyrimidine metabolism; CTP biosynthesis via de novo pathway; UDP from UMP (UMPK route): step 1/1. Allosterically activated by GTP. Inhibited by UTP. Functionally, catalyzes the reversible phosphorylation of UMP to UDP. This Parasynechococcus marenigrum (strain WH8102) protein is Uridylate kinase.